The following is a 149-amino-acid chain: MADQLTEDQISEFKEAFSLFDKDGDGCITTKELGTVMRSLGQNPTEAELQDMINEVDADGNGTIDFPEFLNLMARKMKDTDSEEELKEAFRVFDKDQNGFISAAELRHVMTNLGEKLTDEEVDEMIREADVDGDGQINYDEFVKVMMAK.

Alanine 2 is modified (N-acetylalanine). EF-hand domains lie at 8-43, 44-79, 81-116, and 117-149; these read DQIS…LGQN, PTEA…KMKD, DSEE…LGEK, and LTDE…MMAK. Positions 21, 23, 25, 27, 32, 57, 59, 61, 63, 68, 94, 96, 98, and 105 each coordinate Ca(2+). Lysine 116 carries the N6,N6,N6-trimethyllysine modification. Residues aspartate 130, aspartate 132, aspartate 134, glutamine 136, and glutamate 141 each coordinate Ca(2+).

The protein belongs to the calmodulin family. As to expression, high expression of PCM5 and 8 in stolon tips and stems, moderate in roots, and low in leaves. Steady-state expression of PCM6 in all the tissues tested, except in the leaves where the expression is lower.

Functionally, calmodulin mediates the control of a large number of enzymes, ion channels and other proteins by Ca(2+). Among the enzymes to be stimulated by the calmodulin-Ca(2+) complex are a number of protein kinases and phosphatases. In Solanum tuberosum (Potato), this protein is Calmodulin-5/6/7/8 (PCM5).